The sequence spans 226 residues: PDGF-related-transforming protein sis (226 aa).

The segment covering 201 to 215 (RRPPKGKHRKCKHTH) has biased composition (basic residues). Residues 201 to 226 (RRPPKGKHRKCKHTHDKTALKETLGA) are disordered.

Belongs to the PDGF/VEGF growth factor family.

The polypeptide is PDGF-related-transforming protein sis (V-SIS) (Woolly monkey sarcoma virus (WMSV)).